The sequence spans 504 residues: Galactokinase (504 aa).

Residues Arg-47, Asp-53, His-54, and Asp-56 each contribute to the alpha-D-galactose site. Residues Gly-150, Gly-152, Ser-154, and Ser-155 each coordinate ATP. Residues Asn-196 and Asp-200 each contribute to the alpha-D-galactose site. The active-site Proton acceptor is the Asp-200. The ATP site is built by Ser-244, Asn-245, and Lys-246. Residue Tyr-254 participates in alpha-D-galactose binding.

It belongs to the GHMP kinase family. GalK subfamily.

The catalysed reaction is alpha-D-galactose + ATP = alpha-D-galactose 1-phosphate + ADP + H(+). Its pathway is carbohydrate metabolism; galactose metabolism. Functionally, galactokinase is a key enzyme in the galactose metabolism where it catalyzes the conversion of alpha-D-galactose to galactose 1-phosphate. Can also induce the transcription of the gal genes in response to the organism being challenged with galactose as the sole source of carbon. This is Galactokinase from Candida parapsilosis (Yeast).